Consider the following 229-residue polypeptide: Heptaprenylglyceryl phosphate synthase (229 aa).

Position 12 (Lys-12) interacts with sn-glycerol 1-phosphate. Residues Asp-14 and Ser-40 each contribute to the Mg(2+) site. Sn-glycerol 1-phosphate-binding positions include 159–164, Gly-189, and 209–210; these read YLEYSG and GN.

This sequence belongs to the GGGP/HepGP synthase family. Group I subfamily. As to quaternary structure, homodimer. It depends on Mg(2+) as a cofactor.

It carries out the reaction sn-glycerol 1-phosphate + all-trans-heptaprenyl diphosphate = 3-heptaprenyl-sn-glycero-1-phosphate + diphosphate. Its pathway is membrane lipid metabolism; glycerophospholipid metabolism. Its function is as follows. Prenyltransferase that catalyzes in vivo the transfer of the heptaprenyl moiety of heptaprenyl pyrophosphate (HepPP; 35 carbon atoms) to the C3 hydroxyl of sn-glycerol-1-phosphate (G1P), producing heptaprenylglyceryl phosphate (HepGP). This reaction is an ether-bond-formation step in the biosynthesis of archaea-type G1P-based membrane lipids found in Bacillales. In Bacillus cereus (strain ZK / E33L), this protein is Heptaprenylglyceryl phosphate synthase.